Here is a 1233-residue protein sequence, read N- to C-terminus: Structural maintenance of chromosomes protein 1A (1233 aa).

Residue 32 to 39 coordinates ATP; it reads GPNGSGKS. 2 coiled-coil regions span residues 104-124 and 163-503; these read EYKI…LEKL and ELAQ…KAEI. Residues 284 to 293 show a composition bias toward basic and acidic residues; the sequence is IKEKDSELNQ. Disordered regions lie at residues 284 to 308 and 348 to 369; these read IKEK…TSHK and QEFE…TLEE. Phosphoserine is present on residues Ser-358 and Ser-360. Positions 515 to 629 constitute an SMC hinge domain; sequence VYGRLIDLCQ…DNVEDARRIA (115 aa). Lys-648 and Lys-713 each carry N6-acetyllysine. A coiled-coil region spans residues 667–935; that stretch reads DEKAVDKLKE…RHNLLQACKM (269 aa). Positions 947-969 are disordered; it reads MDDISQEEGSSQGEESVSGSQRT. The span at 953–967 shows a compositional bias: low complexity; the sequence is EEGSSQGEESVSGSQ. Phosphoserine is present on residues Ser-957, Ser-962, Ser-966, and Ser-970. Residues 988–1068 adopt a coiled-coil conformation; that stretch reads EDLKDAQAEE…FEQIKKERFD (81 aa). At Lys-1037 the chain carries N6-acetyllysine.

It belongs to the SMC family. SMC1 subfamily. Forms a heterodimer with SMC3 in cohesin complexes. Cohesin complexes are composed of the SMC1 (SMC1A or SMC1B) and SMC3 heterodimer attached via their SMC hinge domain, RAD21 which link them, and one STAG protein (STAG1, STAG2 or STAG3), which interacts with RAD21. In germ cell cohesin complexes, SMC1A is mutually exclusive with SMC1B. Interacts with STAG3. Found in a complex with CDCA5, SMC3 and RAD21, PDS5A/SCC-112 and PDS5B/APRIN. Found in a complex containing POLE and SMC3. Interacts with BRCA1, SYCP2, NDC80, RPGR and BRAT1. The cohesin complex interacts with the cohesin loading complex subunits NIPBL/Scc2 (via HEAT repeats) and MAU2/Scc4. NIPBL directly contacts all members of the complex, RAD21, SMC1A/B, SMC3 and STAG1. In terms of processing, phosphorylated upon ionizing radiation or DNA methylation. Phosphorylation of Ser-957 and Ser-966 activates it and is required for S-phase checkpoint activation. Post-translationally, ubiquitinated by the DCX(DCAF15) complex, leading to its degradation. Ubiquitous (at protein level).

The protein localises to the nucleus. It localises to the chromosome. The protein resides in the centromere. Functionally, involved in chromosome cohesion during cell cycle and in DNA repair. Involved in DNA repair via its interaction with BRCA1 and its related phosphorylation by ATM, and works as a downstream effector in the ATM/NBS1 branch of S-phase checkpoint. Central component of cohesin complex. The cohesin complex is required for the cohesion of sister chromatids after DNA replication. The cohesin complex apparently forms a large proteinaceous ring within which sister chromatids can be trapped. At anaphase, the complex is cleaved and dissociates from chromatin, allowing sister chromatids to segregate. The cohesin complex may also play a role in spindle pole assembly during mitosis. Involved in DNA repair via its interaction with BRCA1 and its related phosphorylation by ATM, or via its phosphorylation by ATR. Works as a downstream effector both in the ATM/NBS1 branch and in the ATR/MSH2 branch of S-phase checkpoint. The protein is Structural maintenance of chromosomes protein 1A (Smc1a) of Mus musculus (Mouse).